Reading from the N-terminus, the 253-residue chain is PAXIP1-associated glutamate-rich protein 1 (253 aa).

Disordered stretches follow at residues 1–109 and 128–253; these read MSLV…MPPP and QAEI…QRKY. Basic and acidic residues predominate over residues 51–62; the sequence is EGGREEAEHEGS. The sufficient for interaction with NCOA1 stretch occupies residues 116 to 160; that stretch reads YELLAAHGTLELQAEILPRRPPTPEAQSEEERSDEEPEAKEEEEE. Position 138 is a phosphothreonine (threonine 138). The span at 142–159 shows a compositional bias: acidic residues; that stretch reads QSEEERSDEEPEAKEEEE. Phosphoserine is present on residues serine 143 and serine 148. The tract at residues 161-253 is sufficient for interaction with ESR1; sequence KPHMPTEFDF…GSLFPRQRKY (93 aa). Residues 195–223 show a composition bias toward basic and acidic residues; sequence QKREARLDKVLSDMKRHKKLEEQILRTGR. Residue serine 237 is modified to Phosphoserine.

In terms of assembly, component of the KMT2 family MLL2/MLL3 complex, at least composed of the histone methyltransferases KMT2D and/or KMT2C, the common complex subunits ASH2L, RBBP5, WDR5 and DPY30, and the complex type-specific subunits PAXIP1/PTIP, PAGR1, NCOA6 and KDM6A; PAXIP1 is required for the association with the MLL2/MLL3 complex. Forms a constitutive complex with PAXIP1/PTIP independently of the MLL2/MLL3 complex. Interacts with NCOA1, ESR1, NR3C1, AR.

The protein resides in the nucleus. Functionally, its association with the histone methyltransferase MLL2/MLL3 complex is suggesting a role in epigenetic transcriptional activation. However, in association with PAXIP1/PTIP is proposed to function at least in part independently of the MLL2/MLL3 complex. Proposed to be recruited by PAXIP1 to sites of DNA damage where the PAGR1:PAXIP1 complex is required for cell survival in response to DNA damage independently of the MLL2/MLL3 complex. However, its function in DNA damage has been questioned. During immunoglobulin class switching in activated B-cells is involved in transcription regulation of downstream switch regions at the immunoglobulin heavy-chain (Igh) locus independently of the MLL2/MLL3 complex. Involved in both estrogen receptor-regulated gene transcription and estrogen-stimulated G1/S cell-cycle transition. Acts as a transcriptional cofactor for nuclear hormone receptors. Inhibits the induction properties of several steroid receptors such as NR3C1, AR and PPARG; the mechanism of inhibition appears to be gene-dependent. The protein is PAXIP1-associated glutamate-rich protein 1 (PAGR1) of Bos taurus (Bovine).